The primary structure comprises 353 residues: rRNA methyltransferase 1, mitochondrial (353 aa).

The transit peptide at 1 to 20 directs the protein to the mitochondrion; it reads MALLSTVRGATWGRLVTRHF. The interval 311-353 is disordered; the sequence is PTEGERRQLLQDPQEPSARSEGLSMAQHPGLSSGPEKERQNEG.

This sequence belongs to the class IV-like SAM-binding methyltransferase superfamily. RNA methyltransferase TrmH family.

It localises to the mitochondrion matrix. The enzyme catalyses guanosine(1145) in 16S rRNA + S-adenosyl-L-methionine = 2'-O-methylguanosine(1145) in 16S rRNA + S-adenosyl-L-homocysteine + H(+). S-adenosyl-L-methionine-dependent 2'-O-ribose methyltransferase that catalyzes the formation of 2'-O-methylguanosine at position 1145 (Gm1145) in the 16S mitochondrial large subunit ribosomal RNA (mtLSU rRNA), a universally conserved modification in the peptidyl transferase domain of the mtLSU rRNA. The polypeptide is rRNA methyltransferase 1, mitochondrial (Homo sapiens (Human)).